The sequence spans 183 residues: Troponin I, fast skeletal muscle (183 aa).

An N-acetylserine modification is found at Ser2. The interval 2-48 (SDEEKKRRAATARRQHLKSAMLQLAVTEIEKEAAAKEVEKQNYLAEH) is involved in binding TNC. Residues 97–117 (SQKLFDLRGKFKRPPLRRVRM) are involved in binding TNC and actin.

It belongs to the troponin I family. In terms of assembly, binds to actin and tropomyosin. Post-translationally, the N-terminus is blocked.

Its function is as follows. Troponin I is the inhibitory subunit of troponin, the thin filament regulatory complex which confers calcium-sensitivity to striated muscle actomyosin ATPase activity. The polypeptide is Troponin I, fast skeletal muscle (TNNI2) (Gallus gallus (Chicken)).